The sequence spans 442 residues: D-serine dehydratase (442 aa).

Lysine 118 is modified (N6-(pyridoxal phosphate)lysine).

The protein belongs to the serine/threonine dehydratase family. DsdA subfamily. As to quaternary structure, monomer. Requires pyridoxal 5'-phosphate as cofactor.

The catalysed reaction is D-serine = pyruvate + NH4(+). The protein is D-serine dehydratase of Citrobacter koseri (strain ATCC BAA-895 / CDC 4225-83 / SGSC4696).